Consider the following 1104-residue polypeptide: Lon protease homolog, mitochondrial (1104 aa).

The transit peptide at 1 to 58 directs the protein to the mitochondrion; sequence MLPLRAFARLAQRPRLSRPTQLARSSLPRPSPSRPAAHYLALAPAPSTRFLHSSPPVL. A disordered region spans residues 8–144; it reads ARLAQRPRLS…PGAGGPKEVA (137 aa). Over residues 22–46 the composition is skewed to low complexity; that stretch reads LARSSLPRPSPSRPAAHYLALAPAP. Residues 80 to 103 show a composition bias toward basic and acidic residues; the sequence is KQDDQVEKPLPDAESSKSAEERAK. The span at 104 to 128 shows a compositional bias: low complexity; the sequence is SQSSKPDIKASSSDSVSSSAPAPGS. Residues 129 to 139 are compositionally biased toward gly residues; the sequence is ADGGSPPGAGG. The Lon N-terminal domain maps to 155 to 444; that stretch reads VLAIPITHRP…RALVLLKKEL (290 aa). Residue 597–604 coordinates ATP; the sequence is GPPGVGKT. The region spanning 895–1082 is the Lon proteolytic domain; the sequence is SPPAGVSTGL…RQVLHEAFRG (188 aa). Catalysis depends on residues Ser-987 and Lys-1030.

The protein belongs to the peptidase S16 family. In terms of assembly, homohexamer or homoheptamer. Organized in a ring with a central cavity.

It localises to the mitochondrion matrix. The catalysed reaction is Hydrolysis of proteins in presence of ATP.. Its function is as follows. ATP-dependent serine protease that mediates the selective degradation of misfolded, unassembled or oxidatively damaged polypeptides as well as certain short-lived regulatory proteins in the mitochondrial matrix. May also have a chaperone function in the assembly of inner membrane protein complexes. Participates in the regulation of mitochondrial gene expression and in the maintenance of the integrity of the mitochondrial genome. Binds to mitochondrial DNA in a site-specific manner. The sequence is that of Lon protease homolog, mitochondrial from Cryptococcus neoformans var. neoformans serotype D (strain B-3501A) (Filobasidiella neoformans).